The primary structure comprises 179 residues: Translation initiation factor IF-3 (179 aa).

The protein belongs to the IF-3 family. As to quaternary structure, monomer.

The protein localises to the cytoplasm. Functionally, IF-3 binds to the 30S ribosomal subunit and shifts the equilibrium between 70S ribosomes and their 50S and 30S subunits in favor of the free subunits, thus enhancing the availability of 30S subunits on which protein synthesis initiation begins. The protein is Translation initiation factor IF-3 of Zymomonas mobilis subsp. mobilis (strain ATCC 31821 / ZM4 / CP4).